We begin with the raw amino-acid sequence, 264 residues long: Thymidylate synthase (264 aa).

A dUMP-binding site is contributed by Arg-21. His-51 lines the (6R)-5,10-methylene-5,6,7,8-tetrahydrofolate pocket. 126 to 127 (RR) contacts dUMP. Cys-146 serves as the catalytic Nucleophile. DUMP contacts are provided by residues 166-169 (RSCD), Asn-177, and 207-209 (HLY). Asp-169 serves as a coordination point for (6R)-5,10-methylene-5,6,7,8-tetrahydrofolate. Ala-263 lines the (6R)-5,10-methylene-5,6,7,8-tetrahydrofolate pocket.

It belongs to the thymidylate synthase family. Bacterial-type ThyA subfamily. Homodimer.

It is found in the cytoplasm. The catalysed reaction is dUMP + (6R)-5,10-methylene-5,6,7,8-tetrahydrofolate = 7,8-dihydrofolate + dTMP. The protein operates within pyrimidine metabolism; dTTP biosynthesis. Functionally, catalyzes the reductive methylation of 2'-deoxyuridine-5'-monophosphate (dUMP) to 2'-deoxythymidine-5'-monophosphate (dTMP) while utilizing 5,10-methylenetetrahydrofolate (mTHF) as the methyl donor and reductant in the reaction, yielding dihydrofolate (DHF) as a by-product. This enzymatic reaction provides an intracellular de novo source of dTMP, an essential precursor for DNA biosynthesis. This Shewanella sp. (strain MR-4) protein is Thymidylate synthase.